A 474-amino-acid chain; its full sequence is tRNA-2-methylthio-N(6)-dimethylallyladenosine synthase (474 aa).

Positions 3 to 120 (QKLHIKTWGC…LPEMINQIRG (118 aa)) constitute an MTTase N-terminal domain. The [4Fe-4S] cluster site is built by Cys-12, Cys-49, Cys-83, Cys-157, Cys-161, and Cys-164. Residues 143–375 (RAEGPTAFVS…QQRINNQAAQ (233 aa)) enclose the Radical SAM core domain. The TRAM domain maps to 378-441 (RAMLGTEQRV…TNSLRGEVVR (64 aa)).

It belongs to the methylthiotransferase family. MiaB subfamily. In terms of assembly, monomer. The cofactor is [4Fe-4S] cluster.

It is found in the cytoplasm. The enzyme catalyses N(6)-dimethylallyladenosine(37) in tRNA + (sulfur carrier)-SH + AH2 + 2 S-adenosyl-L-methionine = 2-methylsulfanyl-N(6)-dimethylallyladenosine(37) in tRNA + (sulfur carrier)-H + 5'-deoxyadenosine + L-methionine + A + S-adenosyl-L-homocysteine + 2 H(+). In terms of biological role, catalyzes the methylthiolation of N6-(dimethylallyl)adenosine (i(6)A), leading to the formation of 2-methylthio-N6-(dimethylallyl)adenosine (ms(2)i(6)A) at position 37 in tRNAs that read codons beginning with uridine. The protein is tRNA-2-methylthio-N(6)-dimethylallyladenosine synthase of Pasteurella multocida (strain Pm70).